Reading from the N-terminus, the 171-residue chain is Co-chaperone protein HscB (171 aa).

Residues 2 to 74 (DYFTLFGLPA…LMRAEYLLSL (73 aa)) enclose the J domain.

It belongs to the HscB family. Interacts with HscA and stimulates its ATPase activity. Interacts with IscU.

Its function is as follows. Co-chaperone involved in the maturation of iron-sulfur cluster-containing proteins. Seems to help targeting proteins to be folded toward HscA. The sequence is that of Co-chaperone protein HscB from Shigella boydii serotype 18 (strain CDC 3083-94 / BS512).